The chain runs to 542 residues: Cryptochrome-1 (542 aa).

One can recognise a Photolyase/cryptochrome alpha/beta domain in the interval 5 to 140 (GANVIWFRHG…DFVEKVSHTL (136 aa)). FAD contacts are provided by residues Arg-237, Ser-265, Ser-267, Gln-311, His-378, 410–412 (DAD), Cys-416, and Asn-419.

The protein belongs to the DNA photolyase class-1 family. As to quaternary structure, interacts with tim and per; promoted by light conditions. Interaction with tim irreversibly commits tim to proteasomal degradation. Interacts with l(1)G0136/CG8198. FAD serves as cofactor. Expressed at higher levels in the head than in body and it is more expressed in antennae than in legs, wings and mouth appendages. Prominent expression is seen in cells of the lateral brain, which are close to or coincident with the clock neurons. Abundance oscillates in a circadian manner.

It is found in the cytoplasm. Its subcellular location is the perinuclear region. The protein resides in the nucleus. Its function is as follows. Blue light-dependent regulator that is the input of the circadian feedback loop. Has no photolyase activity for cyclobutane pyrimidine dimers or 6-4 photoproducts. Regulation of expression by light suggests a role in photoreception for locomotor activity rhythms. Functions, together with per, as a transcriptional repressor required for the oscillation of peripheral circadian clocks and for the correct specification of clock cells. Genes directly activated by the transcription factors Clock (Clk) and cycle (cyc) are repressed by cry. Necessary for light-dependent magnetosensitivity, an intact circadian system is not required for the magnetoreception mechanism to operate. Required for both the naive and trained responses to magnetic field, consistent with the notion that cry is in the input pathway of magnetic sensing. The chain is Cryptochrome-1 from Drosophila melanogaster (Fruit fly).